The following is a 690-amino-acid chain: Eukaryotic translation initiation factor 3 subunit B (690 aa).

Over residues 1 to 11 the composition is skewed to basic and acidic residues; it reads MAKKKSEDHSG. The interval 1 to 37 is disordered; it reads MAKKKSEDHSGGDANDSDYNEEPNFEDPPNFVDNISD. Acidic residues predominate over residues 15 to 25; it reads NDSDYNEEPNF. Residues 57–141 enclose the RRM domain; the sequence is SVVVVDNIPK…HTFAVNLFTD (85 aa). 6 WD repeats span residues 207 to 246, 247 to 289, 293 to 331, 334 to 369, 442 to 484, and 530 to 575; these read TRERFTDTFVKWSPLGTYVVTFHKPGVAIWGGSSFQKIQK, FPHT…EKRS, DGMSVLSMFRWSHDDKYVARMGDNSIHIYETPSFYLLDL, IKIPGIRGFSWSPTDNVIAYWVEEQNQIPARVTLME, EIRE…KPSL, and PDHF…IKRT. Residues 614–645 adopt a coiled-coil conformation; it reads QKDRLRLTRASKELLEKRSQLRETFMEYRNKR.

This sequence belongs to the eIF-3 subunit B family. Component of the eukaryotic translation initiation factor 3 (eIF-3) complex. The eIF-3 complex interacts with pix. Interacts with mxt.

It is found in the cytoplasm. RNA-binding component of the eukaryotic translation initiation factor 3 (eIF-3) complex, which is involved in protein synthesis of a specialized repertoire of mRNAs and, together with other initiation factors, stimulates binding of mRNA and methionyl-tRNAi to the 40S ribosome. The eIF-3 complex specifically targets and initiates translation of a subset of mRNAs involved in cell proliferation. This is Eukaryotic translation initiation factor 3 subunit B from Drosophila pseudoobscura pseudoobscura (Fruit fly).